Reading from the N-terminus, the 267-residue chain is Shikimate dehydrogenase (NADP(+)) (267 aa).

Shikimate-binding positions include 14–16 (SLS) and Thr-61. Residue Lys-65 is the Proton acceptor of the active site. Shikimate is bound by residues Asn-86 and Asp-101. NADP(+)-binding positions include 126 to 130 (GAGGA), 150 to 155 (NRTPFK), and Leu-213. Tyr-215 lines the shikimate pocket. Residue Gly-236 coordinates NADP(+).

It belongs to the shikimate dehydrogenase family. In terms of assembly, homodimer.

It carries out the reaction shikimate + NADP(+) = 3-dehydroshikimate + NADPH + H(+). It participates in metabolic intermediate biosynthesis; chorismate biosynthesis; chorismate from D-erythrose 4-phosphate and phosphoenolpyruvate: step 4/7. Involved in the biosynthesis of the chorismate, which leads to the biosynthesis of aromatic amino acids. Catalyzes the reversible NADPH linked reduction of 3-dehydroshikimate (DHSA) to yield shikimate (SA). This is Shikimate dehydrogenase (NADP(+)) from Ruthia magnifica subsp. Calyptogena magnifica.